The chain runs to 577 residues: Proline--tRNA ligase (577 aa).

Belongs to the class-II aminoacyl-tRNA synthetase family. ProS type 1 subfamily. Homodimer.

The protein localises to the cytoplasm. The enzyme catalyses tRNA(Pro) + L-proline + ATP = L-prolyl-tRNA(Pro) + AMP + diphosphate. Its function is as follows. Catalyzes the attachment of proline to tRNA(Pro) in a two-step reaction: proline is first activated by ATP to form Pro-AMP and then transferred to the acceptor end of tRNA(Pro). As ProRS can inadvertently accommodate and process non-cognate amino acids such as alanine and cysteine, to avoid such errors it has two additional distinct editing activities against alanine. One activity is designated as 'pretransfer' editing and involves the tRNA(Pro)-independent hydrolysis of activated Ala-AMP. The other activity is designated 'posttransfer' editing and involves deacylation of mischarged Ala-tRNA(Pro). The misacylated Cys-tRNA(Pro) is not edited by ProRS. This chain is Proline--tRNA ligase, found in Chlamydia abortus (strain DSM 27085 / S26/3) (Chlamydophila abortus).